The sequence spans 138 residues: Large ribosomal subunit protein uL16 (138 aa).

The segment covering 1–13 (MLQPARRKYRKEQ) has biased composition (basic residues). Positions 1–22 (MLQPARRKYRKEQKGRNTGVAT) are disordered.

The protein belongs to the universal ribosomal protein uL16 family. Part of the 50S ribosomal subunit.

Its function is as follows. Binds 23S rRNA and is also seen to make contacts with the A and possibly P site tRNAs. The polypeptide is Large ribosomal subunit protein uL16 (Paracidovorax citrulli (strain AAC00-1) (Acidovorax citrulli)).